The primary structure comprises 177 residues: Shikimate kinase (177 aa).

An ATP-binding site is contributed by 17–22; that stretch reads GAGKST. A Mg(2+)-binding site is contributed by Ser-21. 3 residues coordinate substrate: Asp-39, Arg-63, and Gly-85. Position 123 (Arg-123) interacts with ATP. Arg-142 contributes to the substrate binding site. Arg-160 is a binding site for ATP.

It belongs to the shikimate kinase family. Monomer. Mg(2+) is required as a cofactor.

Its subcellular location is the cytoplasm. The enzyme catalyses shikimate + ATP = 3-phosphoshikimate + ADP + H(+). It functions in the pathway metabolic intermediate biosynthesis; chorismate biosynthesis; chorismate from D-erythrose 4-phosphate and phosphoenolpyruvate: step 5/7. Catalyzes the specific phosphorylation of the 3-hydroxyl group of shikimic acid using ATP as a cosubstrate. This is Shikimate kinase from Halorhodospira halophila (strain DSM 244 / SL1) (Ectothiorhodospira halophila (strain DSM 244 / SL1)).